The chain runs to 165 residues: Large ribosomal subunit protein uL10 (165 aa).

This sequence belongs to the universal ribosomal protein uL10 family. Part of the ribosomal stalk of the 50S ribosomal subunit. The N-terminus interacts with L11 and the large rRNA to form the base of the stalk. The C-terminus forms an elongated spine to which L12 dimers bind in a sequential fashion forming a multimeric L10(L12)X complex.

Functionally, forms part of the ribosomal stalk, playing a central role in the interaction of the ribosome with GTP-bound translation factors. This Shewanella halifaxensis (strain HAW-EB4) protein is Large ribosomal subunit protein uL10.